A 112-amino-acid polypeptide reads, in one-letter code: Photosystem II reaction center Psb28 protein (112 aa).

This sequence belongs to the Psb28 family. Part of the photosystem II complex.

The protein localises to the cellular thylakoid membrane. The protein is Photosystem II reaction center Psb28 protein of Microcystis aeruginosa (strain NIES-843 / IAM M-2473).